Reading from the N-terminus, the 276-residue chain is Ribosomal RNA small subunit methyltransferase A (276 aa).

S-adenosyl-L-methionine-binding residues include Asn-27, Leu-29, Gly-54, Glu-75, Asp-101, and Asn-123.

It belongs to the class I-like SAM-binding methyltransferase superfamily. rRNA adenine N(6)-methyltransferase family. RsmA subfamily.

It is found in the cytoplasm. It catalyses the reaction adenosine(1518)/adenosine(1519) in 16S rRNA + 4 S-adenosyl-L-methionine = N(6)-dimethyladenosine(1518)/N(6)-dimethyladenosine(1519) in 16S rRNA + 4 S-adenosyl-L-homocysteine + 4 H(+). Specifically dimethylates two adjacent adenosines (A1518 and A1519) in the loop of a conserved hairpin near the 3'-end of 16S rRNA in the 30S particle. May play a critical role in biogenesis of 30S subunits. This Bartonella tribocorum (strain CIP 105476 / IBS 506) protein is Ribosomal RNA small subunit methyltransferase A.